A 321-amino-acid chain; its full sequence is Ribosomal large subunit pseudouridine synthase D (321 aa).

Residues 16-93 (YRLDYILSKL…IPLNIIYEDN (78 aa)) enclose the S4 RNA-binding domain. The active site involves aspartate 142.

This sequence belongs to the pseudouridine synthase RluA family.

It is found in the cytoplasm. The enzyme catalyses uridine(1911/1915/1917) in 23S rRNA = pseudouridine(1911/1915/1917) in 23S rRNA. Functionally, responsible for synthesis of pseudouridine from uracil at positions 1911, 1915 and 1917 in 23S ribosomal RNA. The protein is Ribosomal large subunit pseudouridine synthase D (rluD) of Blochmanniella floridana.